The following is a 169-amino-acid chain: Cytochrome c oxidase subunit 4 isoform 1, mitochondrial (169 aa).

Residues 1–22 (MLATRALSLIGKRAISTSVCLR) constitute a mitochondrion transit peptide. At 23–98 (AHGSVVKSED…SFAEMNKGTN (76 aa)) the chain is on the mitochondrial matrix side. Lys29 is subject to N6-acetyllysine; alternate. The residue at position 29 (Lys29) is an N6-succinyllysine; alternate. Lys53 is modified (N6-acetyllysine). Phosphoserine is present on residues Ser56 and Ser58. N6-acetyllysine; alternate is present on Lys60. Lys60 carries the N6-succinyllysine; alternate modification. Position 67 is an N6-acetyllysine (Lys67). A helical transmembrane segment spans residues 99–124 (EWKTVVGLAMFFIGFTALVLIWEKSY). Over 125-169 (VYGPIPHTFDRDWVAMQTKRMLDMKVNPIQGFSAKWDYNKNEWKK) the chain is Mitochondrial intermembrane.

The protein belongs to the cytochrome c oxidase IV family. Component of the cytochrome c oxidase (complex IV, CIV), a multisubunit enzyme composed of 14 subunits. The complex is composed of a catalytic core of 3 subunits MT-CO1, MT-CO2 and MT-CO3, encoded in the mitochondrial DNA, and 11 supernumerary subunits COX4I, COX5A, COX5B, COX6A, COX6B, COX6C, COX7A, COX7B, COX7C, COX8 and NDUFA4, which are encoded in the nuclear genome. The complex exists as a monomer or a dimer and forms supercomplexes (SCs) in the inner mitochondrial membrane with NADH-ubiquinone oxidoreductase (complex I, CI) and ubiquinol-cytochrome c oxidoreductase (cytochrome b-c1 complex, complex III, CIII), resulting in different assemblies (supercomplex SCI(1)III(2)IV(1) and megacomplex MCI(2)III(2)IV(2)). Interacts with PHB2; the interaction decreases in absence of SPHK2. Interacts with AFG1L. Interacts with ABCB7; this interaction allows the regulation of cellular iron homeostasis and cellular reactive oxygen species (ROS) levels in cardiomyocytes. Interacts with FLVCR2; this interaction occurs in the absence of heme and is disrupted upon heme binding. Interacts with IRGC.

Its subcellular location is the mitochondrion inner membrane. It functions in the pathway energy metabolism; oxidative phosphorylation. In terms of biological role, component of the cytochrome c oxidase, the last enzyme in the mitochondrial electron transport chain which drives oxidative phosphorylation. The respiratory chain contains 3 multisubunit complexes succinate dehydrogenase (complex II, CII), ubiquinol-cytochrome c oxidoreductase (cytochrome b-c1 complex, complex III, CIII) and cytochrome c oxidase (complex IV, CIV), that cooperate to transfer electrons derived from NADH and succinate to molecular oxygen, creating an electrochemical gradient over the inner membrane that drives transmembrane transport and the ATP synthase. Cytochrome c oxidase is the component of the respiratory chain that catalyzes the reduction of oxygen to water. Electrons originating from reduced cytochrome c in the intermembrane space (IMS) are transferred via the dinuclear copper A center (CU(A)) of subunit 2 and heme A of subunit 1 to the active site in subunit 1, a binuclear center (BNC) formed by heme A3 and copper B (CU(B)). The BNC reduces molecular oxygen to 2 water molecules using 4 electrons from cytochrome c in the IMS and 4 protons from the mitochondrial matrix. The chain is Cytochrome c oxidase subunit 4 isoform 1, mitochondrial (Cox4i1) from Rattus norvegicus (Rat).